A 203-amino-acid polypeptide reads, in one-letter code: FMN-dependent NADH:quinone oxidoreductase (203 aa).

FMN-binding positions include Ser-9, 15–17 (SVS), and 138–141 (SRGG).

It belongs to the azoreductase type 1 family. Homodimer. FMN serves as cofactor.

It catalyses the reaction 2 a quinone + NADH + H(+) = 2 a 1,4-benzosemiquinone + NAD(+). It carries out the reaction N,N-dimethyl-1,4-phenylenediamine + anthranilate + 2 NAD(+) = 2-(4-dimethylaminophenyl)diazenylbenzoate + 2 NADH + 2 H(+). Its function is as follows. Quinone reductase that provides resistance to thiol-specific stress caused by electrophilic quinones. Functionally, also exhibits azoreductase activity. Catalyzes the reductive cleavage of the azo bond in aromatic azo compounds to the corresponding amines. The polypeptide is FMN-dependent NADH:quinone oxidoreductase (Methylorubrum extorquens (strain CM4 / NCIMB 13688) (Methylobacterium extorquens)).